The sequence spans 187 residues: UPF0301 protein ESA_00394 (187 aa).

It belongs to the UPF0301 (AlgH) family.

This Cronobacter sakazakii (strain ATCC BAA-894) (Enterobacter sakazakii) protein is UPF0301 protein ESA_00394.